We begin with the raw amino-acid sequence, 202 residues long: Keratin-associated protein 5-10 (202 aa).

7 tandem repeats follow at residues 48–51 (CCKP), 54–57 (CCVP), 144–147 (CCKP), 162–165 (CCNP), 172–175 (CCVP), 182–185 (CCKP), and 192–195 (CCVP). The tract at residues 48-195 (CCKPVCCCVP…CCCQSSCCVP (148 aa)) is 7 X 4 AA repeats of C-C-X-P.

This sequence belongs to the KRTAP type 5 family. As to quaternary structure, interacts with hair keratins. As to expression, expressed in hair root but not in skin. Expressed also in brain and skeletal muscle.

Functionally, in the hair cortex, hair keratin intermediate filaments are embedded in an interfilamentous matrix, consisting of hair keratin-associated protein (KRTAP), which are essential for the formation of a rigid and resistant hair shaft through their extensive disulfide bond cross-linking with abundant cysteine residues of hair keratins. The matrix proteins include the high-sulfur and high-glycine-tyrosine keratins. This Homo sapiens (Human) protein is Keratin-associated protein 5-10 (KRTAP5-10).